The sequence spans 241 residues: Ribose-5-phosphate isomerase A (241 aa).

Substrate-binding positions include 29-32 (TGTT), 84-87 (DGAD), and 97-100 (KGGG). Glu-106 serves as the catalytic Proton acceptor. Lys-124 contributes to the substrate binding site.

Belongs to the ribose 5-phosphate isomerase family. Homodimer.

The catalysed reaction is aldehydo-D-ribose 5-phosphate = D-ribulose 5-phosphate. It functions in the pathway carbohydrate degradation; pentose phosphate pathway; D-ribose 5-phosphate from D-ribulose 5-phosphate (non-oxidative stage): step 1/1. Catalyzes the reversible conversion of ribose-5-phosphate to ribulose 5-phosphate. This chain is Ribose-5-phosphate isomerase A, found in Thermoplasma volcanium (strain ATCC 51530 / DSM 4299 / JCM 9571 / NBRC 15438 / GSS1).